The following is a 109-amino-acid chain: SRA stem-loop-interacting RNA-binding protein, mitochondrial (109 aa).

Ser15 carries the phosphoserine modification. The region spanning 19–103 (PVAFVRRIPW…RRPKLPQTSD (85 aa)) is the RRM domain. Residue Thr101 is modified to Phosphothreonine. Position 102 is a phosphoserine (Ser102).

As to expression, ubiquitously expressed, with highest level in heart, liver, skeletal muscle and testis.

Its subcellular location is the mitochondrion. It localises to the nucleus. RNA-binding protein that acts as a nuclear receptor corepressor. Probably acts by binding the SRA RNA, and repressing the SRA-mediated nuclear receptor coactivation. Binds the STR7 loop of SRA RNA. Also able to repress glucocorticoid (GR), androgen (AR), thyroid (TR) and VDR-mediated transactivation. The sequence is that of SRA stem-loop-interacting RNA-binding protein, mitochondrial (SLIRP) from Homo sapiens (Human).